Reading from the N-terminus, the 238-residue chain is MPLVKAPKKAEPIWKEWDAKAQKAGLRHSVYSVNGDEYTGEWLNNLRHGKGTYMWKRRKSIYEGDWKCGERSGFGTYSVQDSNTGEYIKVYSGYWDNDKKHGYGTHFYSAKEYYEGEWKCGKRCGWGRMYFANGDIYEGEWLEDKHSGQGMLCLANENRYEGSWKDGKKHGPGKFYYLNKGQLYEGVWVEDIPKCGTMVDFGRTEAPYPTKYPLPEVKVADPEGVLKEAQQPLFGEHE.

7 MORN repeats span residues 38–60 (YTGE…RRKS), 62–84 (YEGD…DSNT), 91–113 (YSGY…AKEY), 114–136 (YEGE…NGDI), 137–159 (YEGE…NENR), 160–182 (YEGS…NKGQ), and 184–205 (YEGV…GRTE).

It is found in the cytoplasmic vesicle. Its subcellular location is the secretory vesicle. The protein localises to the acrosome. In terms of biological role, assembles a suppression complex (suppresome) by tethering SIRT1 and MDM2 to regulate composite modifications of p53/TP53. Confers both deacetylation-mediated functional inactivation, by SIRT1, and ubiquitination-dependent degradation, by MDM2, of p53/TP53, promoting a proliferative and cell survival behaviors. May play a role in the regulation of spermatogenesis. This Xenopus laevis (African clawed frog) protein is MORN repeat-containing protein 3 (morn3).